A 150-amino-acid chain; its full sequence is uncharacterized protein (150 aa).

The N-acetyltransferase domain occupies 4-149; that stretch reads IQIRNYQPGD…TNFYMRYKPQ (146 aa).

This sequence belongs to the acetyltransferase family.

This is an uncharacterized protein from Escherichia coli (strain K12).